Here is a 432-residue protein sequence, read N- to C-terminus: Adenylosuccinate synthetase (432 aa).

GTP is bound by residues 13–19 (GDEGKGK) and 41–43 (GHT). D14 serves as the catalytic Proton acceptor. Residues D14 and G41 each contribute to the Mg(2+) site. Residues 14–17 (DEGK), 39–42 (NAGH), T130, R144, Q225, T240, and R304 contribute to the IMP site. The active-site Proton donor is H42. Residue 300-306 (ATTGRRR) participates in substrate binding. GTP is bound by residues R306, 332–334 (KLD), and 415–417 (STG).

It belongs to the adenylosuccinate synthetase family. In terms of assembly, homodimer. Mg(2+) serves as cofactor.

It is found in the cytoplasm. The catalysed reaction is IMP + L-aspartate + GTP = N(6)-(1,2-dicarboxyethyl)-AMP + GDP + phosphate + 2 H(+). It participates in purine metabolism; AMP biosynthesis via de novo pathway; AMP from IMP: step 1/2. Its function is as follows. Plays an important role in the de novo pathway of purine nucleotide biosynthesis. Catalyzes the first committed step in the biosynthesis of AMP from IMP. In Klebsiella pneumoniae (strain 342), this protein is Adenylosuccinate synthetase.